The sequence spans 306 residues: Methionyl-tRNA formyltransferase (306 aa).

110 to 113 (SLLP) contacts (6S)-5,6,7,8-tetrahydrofolate.

This sequence belongs to the Fmt family.

The enzyme catalyses L-methionyl-tRNA(fMet) + (6R)-10-formyltetrahydrofolate = N-formyl-L-methionyl-tRNA(fMet) + (6S)-5,6,7,8-tetrahydrofolate + H(+). Attaches a formyl group to the free amino group of methionyl-tRNA(fMet). The formyl group appears to play a dual role in the initiator identity of N-formylmethionyl-tRNA by promoting its recognition by IF2 and preventing the misappropriation of this tRNA by the elongation apparatus. In Brucella ovis (strain ATCC 25840 / 63/290 / NCTC 10512), this protein is Methionyl-tRNA formyltransferase.